Reading from the N-terminus, the 273-residue chain is Large ribosomal subunit protein uL2 (273 aa).

2 disordered regions span residues Asp35 to Ile54 and Gly222 to Lys273. A compositionally biased stretch (polar residues) spans Lys39–Ile49. Over residues Asp229–Asn239 the composition is skewed to basic and acidic residues. The segment covering Lys253–Lys273 has biased composition (basic residues).

This sequence belongs to the universal ribosomal protein uL2 family. Part of the 50S ribosomal subunit. Forms a bridge to the 30S subunit in the 70S ribosome.

One of the primary rRNA binding proteins. Required for association of the 30S and 50S subunits to form the 70S ribosome, for tRNA binding and peptide bond formation. It has been suggested to have peptidyltransferase activity; this is somewhat controversial. Makes several contacts with the 16S rRNA in the 70S ribosome. This Aeromonas salmonicida (strain A449) protein is Large ribosomal subunit protein uL2.